The primary structure comprises 373 residues: MPGWSCLVTGAGGFVGQRIIRMLVQEKELQEVRALDKVFRPETKEEFSKLQTKAKVTMLEGDILDAQYLRRACQGISVVIHTAAVIDVSHVLPRQTILDVNLKGTQNILEACVEASVPAFIYCSTVDVAGPNSYKKIILNGHEEEHHESTWSDAYPYSKRMAEKAVLAANGSILKNGGTLHTCALRPMYIYGERSPFLSVMILAALKNKGILNVTGKFSIANPVYVGNVAWAHILAARGLRDPKKSQNVQGQFYYISDDTPHQSYDDLNCTLSKEWGLRLDSSWSLPLPLLYWLAFLLETVSFLLRPFYNYRPPFNCHLVTLSNSKFTFSYKKAQRDLGYVPLVSWEEAKQKTSEWIGTLVEQHRETLDTKSQ.

NADP(+) contacts are provided by residues 10–15 (GAGGFV), tyrosine 155, and lysine 159. Lysine 159 functions as the Proton donor in the catalytic mechanism. Residues 288 to 308 (LPLLYWLAFLLETVSFLLRPF) traverse the membrane as a helical segment.

It belongs to the 3-beta-HSD family. As to expression, adrenal glands, kidney, testes and ovaries.

It is found in the endoplasmic reticulum membrane. The protein resides in the mitochondrion membrane. It carries out the reaction a 3beta-hydroxy-Delta(5)-steroid + NAD(+) = a 3-oxo-Delta(5)-steroid + NADH + H(+). The catalysed reaction is pregnenolone + NAD(+) = pregn-5-ene-3,20-dione + NADH + H(+). The enzyme catalyses 3beta-hydroxyandrost-5-en-17-one + NAD(+) = androst-5-ene-3,17-dione + NADH + H(+). It catalyses the reaction androst-5-en-3beta,17beta-diol + NAD(+) = 17beta-hydroxy-androst-5-en-3-one + NADH + H(+). It carries out the reaction a 3beta-hydroxysteroid + NADP(+) = a 3-oxosteroid + NADPH + H(+). The catalysed reaction is 5alpha-androstane-3beta,17beta-diol + NADP(+) = 17beta-hydroxy-5alpha-androstan-3-one + NADPH + H(+). The enzyme catalyses 3beta-hydroxy-5alpha-androstan-17-one + NADP(+) = 5alpha-androstan-3,17-dione + NADPH + H(+). It catalyses the reaction a 3-oxo-Delta(5)-steroid = a 3-oxo-Delta(4)-steroid. It carries out the reaction pregn-5-ene-3,20-dione = progesterone. The catalysed reaction is androst-5-ene-3,17-dione = androst-4-ene-3,17-dione. The enzyme catalyses 17beta-hydroxy-androst-5-en-3-one = testosterone. It catalyses the reaction 5alpha-androstane-3beta,17beta-diol + NAD(+) = 17beta-hydroxy-5alpha-androstan-3-one + NADH + H(+). The protein operates within steroid hormone biosynthesis. It participates in steroid metabolism. Its function is as follows. A bifunctional enzyme responsible for the oxidation and isomerization of 3beta-hydroxy-Delta(5)-steroid precursors to 3-oxo-Delta(4)-steroids, an essential step in steroid hormone biosynthesis. Specifically catalyzes the conversion of pregnenolone to progesterone, dehydroepiandrosterone (DHEA) to 4-androstenedione, and androstenediol to testosterone. Additionally, catalyzes the interconversion between 3beta-hydroxy and 3-oxo-5alpha-androstane steroids controlling the bioavalability of the active forms. Specifically converts dihydrotestosterone to its inactive form 5alpha-androstanediol, that does not bind androgen receptor/AR. Also converts androstanedione, a precursor of testosterone and estrone, to epiandrosterone. Expected to use NAD(+) as preferred electron donor for the 3beta-hydroxy-steroid dehydrogenase activity and NADPH for the 3-ketosteroid reductase activity. This Rattus norvegicus (Rat) protein is 3 beta-hydroxysteroid dehydrogenase/Delta 5--&gt;4-isomerase type 1.